The sequence spans 62 residues: MVREARANRSSFLKVKCPDCDNEQTVFSKASTTVKCVVCGRDLATPTGGKANLKAEIISEFK.

C17, C20, C36, and C39 together coordinate Zn(2+). The C4-type zinc-finger motif lies at 17–39 (CPDCDNEQTVFSKASTTVKCVVC).

Belongs to the eukaryotic ribosomal protein eS27 family. In terms of assembly, part of the 30S ribosomal subunit. Zn(2+) is required as a cofactor.

The polypeptide is Small ribosomal subunit protein eS27 (Methanoregula boonei (strain DSM 21154 / JCM 14090 / 6A8)).